A 77-amino-acid chain; its full sequence is Acyl carrier protein (77 aa).

The 76-residue stretch at 1 to 76 (MSVEQRVKEI…DVLDYIKSKQ (76 aa)) folds into the Carrier domain. An O-(pantetheine 4'-phosphoryl)serine modification is found at Ser36.

The protein belongs to the acyl carrier protein (ACP) family. Post-translationally, 4'-phosphopantetheine is transferred from CoA to a specific serine of apo-ACP by AcpS. This modification is essential for activity because fatty acids are bound in thioester linkage to the sulfhydryl of the prosthetic group.

Its subcellular location is the cytoplasm. The protein operates within lipid metabolism; fatty acid biosynthesis. Its function is as follows. Carrier of the growing fatty acid chain in fatty acid biosynthesis. In Sulfurihydrogenibium sp. (strain YO3AOP1), this protein is Acyl carrier protein.